A 137-amino-acid chain; its full sequence is MASLSTTSLSFKAPSTTISQVLRKASSSQSVTFGRFTSSTKSLRLQISCAAKAETVQKVSDIVKEQLALAADVPLTAESKFSALGADSLDTVEIVMALEEKFNISVEESDAQNITTIQEAADLIEDLVQKKPAAETS.

The N-terminal 48 residues, 1–48, are a transit peptide targeting the chloroplast; it reads MASLSTTSLSFKAPSTTISQVLRKASSSQSVTFGRFTSSTKSLRLQIS. In terms of domain architecture, Carrier spans 53-128; that stretch reads AETVQKVSDI…EAADLIEDLV (76 aa). Ser88 carries the O-(pantetheine 4'-phosphoryl)serine modification.

This sequence belongs to the acyl carrier protein (ACP) family. In terms of processing, 4'-phosphopantetheine is transferred from CoA to a specific serine of apo-ACP by acpS. This modification is essential for activity because fatty acids are bound in thioester linkage to the sulfhydryl of the prosthetic group.

The protein resides in the plastid. It localises to the chloroplast. Functionally, carrier of the growing fatty acid chain in fatty acid biosynthesis that plays a major role in the biosynthesis of fatty acids in leaves. Required for the biosynthesis of chloroplast photosynthetic membrane lipids such as monogalactosyldiacylglycerol, digalactosyldiacylglycerol and phosphatidylglycerol. Is essential for the biosynthesis of the cuticular wax and cutin polymers in leaves, and for the establishment of systemic acquired resistance (SAR). The protein is Acyl carrier protein 4, chloroplastic (ACP4) of Arabidopsis thaliana (Mouse-ear cress).